Consider the following 382-residue polypeptide: uncharacterized protein (382 aa).

10 consecutive transmembrane segments (helical) span residues 8–28 (VLLL…LNTL), 41–61 (WQVG…TLIA), 73–93 (SYHC…LTVD), 94–114 (FWSW…IWVI), 133–153 (AAYM…LGIV), 157–177 (LLSV…PLLF), 208–228 (GCII…LYLS), 274–294 (VVIL…ALFI), 325–345 (ALLM…SLLM), and 349–369 (SDNL…MMLL).

Belongs to the major facilitator superfamily. YcaD (TC 2.A.1.26) family.

Its subcellular location is the cell inner membrane. This is an uncharacterized protein from Yersinia pseudotuberculosis serotype O:3 (strain YPIII).